We begin with the raw amino-acid sequence, 445 residues long: Tubulin beta-4B chain (445 aa).

Residues 1–4 (MREI) carry the MREI motif motif. Residue Gln-11 participates in GTP binding. Thr-55 carries the phosphothreonine modification. Lys-58 is subject to N6-acetyllysine. GTP contacts are provided by Glu-69, Ser-138, Gly-142, Thr-143, and Gly-144. Glu-69 is a Mg(2+) binding site. The residue at position 172 (Ser-172) is a Phosphoserine; by CDK1. Residues Asn-204 and Asn-226 each coordinate GTP. Positions 426 to 445 (QDATAEEEGEFEEEAEEEVA) are disordered. Over residues 429-445 (TAEEEGEFEEEAEEEVA) the composition is skewed to acidic residues. Position 438 is a 5-glutamyl polyglutamate (Glu-438).

This sequence belongs to the tubulin family. In terms of assembly, dimer of alpha and beta chains. A typical microtubule is a hollow water-filled tube with an outer diameter of 25 nm and an inner diameter of 15 nM. Alpha-beta heterodimers associate head-to-tail to form protofilaments running lengthwise along the microtubule wall with the beta-tubulin subunit facing the microtubule plus end conferring a structural polarity. Microtubules usually have 13 protofilaments but different protofilament numbers can be found in some organisms and specialized cells. Component of sperm flagellar doublet microtubules. The cofactor is Mg(2+). In terms of processing, some glutamate residues at the C-terminus are polyglycylated, resulting in polyglycine chains on the gamma-carboxyl group. Glycylation is mainly limited to tubulin incorporated into axonemes (cilia and flagella) whereas glutamylation is prevalent in neuronal cells, centrioles, axonemes, and the mitotic spindle. Both modifications can coexist on the same protein on adjacent residues, and lowering polyglycylation levels increases polyglutamylation, and reciprocally. Cilia and flagella glycylation is required for their stability and maintenance. Flagella glycylation controls sperm motility. Post-translationally, some glutamate residues at the C-terminus are polyglutamylated, resulting in polyglutamate chains on the gamma-carboxyl group. Polyglutamylation plays a key role in microtubule severing by spastin (SPAST). SPAST preferentially recognizes and acts on microtubules decorated with short polyglutamate tails: severing activity by SPAST increases as the number of glutamates per tubulin rises from one to eight, but decreases beyond this glutamylation threshold. Glutamylation is also involved in cilia motility. Phosphorylated on Ser-172 by CDK1 during the cell cycle, from metaphase to telophase, but not in interphase. This phosphorylation inhibits tubulin incorporation into microtubules.

The protein localises to the cytoplasm. Its subcellular location is the cytoskeleton. It localises to the flagellum axoneme. Functionally, tubulin is the major constituent of microtubules, a cylinder consisting of laterally associated linear protofilaments composed of alpha- and beta-tubulin heterodimers. Microtubules grow by the addition of GTP-tubulin dimers to the microtubule end, where a stabilizing cap forms. Below the cap, tubulin dimers are in GDP-bound state, owing to GTPase activity of alpha-tubulin. The sequence is that of Tubulin beta-4B chain (TUBB4B) from Bos taurus (Bovine).